The primary structure comprises 78 residues: MAKTQNFVCFTAVLLILILVSTEIPMIEGKTCKLFRGECPVDPCEPEKCDECCKATFGKQICGKCEQESTELHCHCRR.

The signal sequence occupies residues 1-29 (MAKTQNFVCFTAVLLILILVSTEIPMIEG). Disulfide bonds link cysteine 44–cysteine 65, cysteine 49–cysteine 74, and cysteine 53–cysteine 76.

Belongs to the DEFL family.

It is found in the secreted. This Arabidopsis thaliana (Mouse-ear cress) protein is Putative defensin-like protein 202.